The sequence spans 387 residues: Ferrochelatase (387 aa).

Residues H196 and E277 each contribute to the Fe cation site.

This sequence belongs to the ferrochelatase family.

The protein resides in the cytoplasm. It carries out the reaction heme b + 2 H(+) = protoporphyrin IX + Fe(2+). It participates in porphyrin-containing compound metabolism; protoheme biosynthesis; protoheme from protoporphyrin-IX: step 1/1. Its function is as follows. Catalyzes the ferrous insertion into protoporphyrin IX. This Cyanothece sp. (strain PCC 7425 / ATCC 29141) protein is Ferrochelatase.